Consider the following 780-residue polypeptide: Pendrin (780 aa).

At 1 to 87 the chain is on the cytoplasmic side; the sequence is MAARGGRSEP…YRVKEWLLSD (87 aa). A helical membrane pass occupies residues 88–108; it reads IISGVSTGLVGTLQGMAYALL. Alanine 109 is a topological domain (extracellular). A helical membrane pass occupies residues 110-130; that stretch reads AVPVQFGLYSAFFPILTYFVF. The Cytoplasmic portion of the chain corresponds to 131–135; the sequence is GTSRH. The helical transmembrane segment at 136 to 156 threads the bilayer; the sequence is ISVGPFPVVSLMVGSVVLSMA. The Extracellular portion of the chain corresponds to 157 to 191; sequence PDDHFLVPSGNGSALNSTTLDTGTRDAARVLLAST. The helical transmembrane segment at 192 to 212 threads the bilayer; it reads LTLLVGIIQLVFGGLQIGFIV. The Cytoplasmic segment spans residues 213–218; that stretch reads RYLADP. The chain crosses the membrane as a helical span at residues 219 to 239; that stretch reads LVGGFTTAAAFQVLVSQLKIV. The Extracellular segment spans residues 240-263; the sequence is LNVSTKNYNGILSIIYTLIEIFQN. The helical transmembrane segment at 264-284 threads the bilayer; the sequence is IGDTNIADFIAGLLTIIVCMA. Residues 285–295 lie on the Cytoplasmic side of the membrane; that stretch reads VKELNDRFKHR. A helical membrane pass occupies residues 296-316; sequence IPVPIPIEVIVTIIATAISYG. The Extracellular portion of the chain corresponds to 317 to 344; it reads ANLEKNYNAGIVKSIPSGFLPPVLPSVG. The helical transmembrane segment at 345 to 365 threads the bilayer; sequence LFSDMLAASFSIAVVAYAIAV. Residues 366–384 lie on the Cytoplasmic side of the membrane; the sequence is SVGKVYATKHDYVIDGNQE. Residues 385–405 traverse the membrane as a helical segment; that stretch reads FIAFGISNVFSGFFSCFVATT. Residues 406–421 are Extracellular-facing; sequence ALSRTAVQESTGGKTQ. A helical membrane pass occupies residues 422-442; sequence VAGLISAVIVMVAIVALGRLL. The Cytoplasmic segment spans residues 443 to 448; sequence EPLQKS. A helical membrane pass occupies residues 449–469; sequence VLAAVVIANLKGMFMQVCDVP. The Extracellular segment spans residues 470–486; sequence RLWKQNKTDAVIWVFTC. The helical transmembrane segment at 487 to 507 threads the bilayer; that stretch reads IMSIILGLDLGLLAGLLFALL. Residues 508–780 are Cytoplasmic-facing; sequence TVVLRVQFPS…QDEAMRRLAS (273 aa). The 195-residue stretch at 535 to 729 folds into the STAS domain; that stretch reads HYKNLEEPEG…LTVHDAILHL (195 aa).

Belongs to the SLC26A/SulP transporter (TC 2.A.53) family. As to quaternary structure, interacts with IQGAP1. This interaction enhances the chloride-bicarbonate exchange activity of SLC26A4. As to expression, highly expressed in the kidney (at protein level). Throughout the endolymphatic duct and sac, in distinct areas of the utricle and saccule, and in the external sulcus region within the cochlea. Expressed in the parotid gland.

Its subcellular location is the apical cell membrane. It localises to the cell membrane. It catalyses the reaction chloride(in) = chloride(out). The catalysed reaction is iodide(out) = iodide(in). The enzyme catalyses hydrogencarbonate(in) + chloride(out) = hydrogencarbonate(out) + chloride(in). It carries out the reaction iodide(in) + hydrogencarbonate(out) = iodide(out) + hydrogencarbonate(in). It catalyses the reaction iodide(in) + chloride(out) = iodide(out) + chloride(in). The catalysed reaction is formate(in) + chloride(out) = formate(out) + chloride(in). In terms of biological role, sodium-independent transporter of chloride and iodide. Mediates electroneutral iodide-chloride, iodide-bicarbonate and chloride-bicarbonate exchange with 1:1 stoichiometry. Mediates elctroneutral chloride-formate exchange. The sequence is that of Pendrin (Slc26a4) from Mus musculus (Mouse).